Consider the following 244-residue polypeptide: Uracil phosphoribosyltransferase (244 aa).

GTP-binding positions include Lys-59, Arg-68, and 102–105 (YSKI). Position 112 (Arg-112) interacts with 5-phospho-alpha-D-ribose 1-diphosphate. Arg-129 lines the GTP pocket. Residue Arg-137 coordinates 5-phospho-alpha-D-ribose 1-diphosphate. A GTP-binding site is contributed by Arg-158. 5-phospho-alpha-D-ribose 1-diphosphate contacts are provided by residues Asp-164 and 164-172 (DPMCATAGS). Uracil is bound by residues Ile-229 and 234-236 (GDF). Asp-235 is a 5-phospho-alpha-D-ribose 1-diphosphate binding site.

It belongs to the UPRTase family. In terms of assembly, monomer. Forms homodimers in presence of substrates and homotetramers in the presence of GTP. Requires Mg(2+) as cofactor.

The catalysed reaction is UMP + diphosphate = 5-phospho-alpha-D-ribose 1-diphosphate + uracil. The protein operates within pyrimidine metabolism; UMP biosynthesis via salvage pathway; UMP from uracil: step 1/1. With respect to regulation, allosterically activated by GTP. Binding of GTP leads to 5-time activation of the enzyme. In terms of biological role, catalyzes the conversion of uracil and 5-phospho-alpha-D-ribose 1-diphosphate (PRPP) to UMP and diphosphate. The polypeptide is Uracil phosphoribosyltransferase (uprt) (Toxoplasma gondii).